The following is a 689-amino-acid chain: Glycine--tRNA ligase beta subunit (689 aa).

It belongs to the class-II aminoacyl-tRNA synthetase family. As to quaternary structure, tetramer of two alpha and two beta subunits.

It localises to the cytoplasm. It carries out the reaction tRNA(Gly) + glycine + ATP = glycyl-tRNA(Gly) + AMP + diphosphate. The protein is Glycine--tRNA ligase beta subunit of Escherichia coli (strain K12 / MC4100 / BW2952).